A 539-amino-acid chain; its full sequence is Phenylalanine--tRNA ligase beta subunit (539 aa).

In terms of domain architecture, B5 spans 271–347; that stretch reads LSPARWTVTT…KSYGYENLKA (77 aa). Residues D325, D331, E334, and D335 each coordinate Mg(2+).

This sequence belongs to the phenylalanyl-tRNA synthetase beta subunit family. Type 2 subfamily. Tetramer of two alpha and two beta subunits. The cofactor is Mg(2+).

It is found in the cytoplasm. The catalysed reaction is tRNA(Phe) + L-phenylalanine + ATP = L-phenylalanyl-tRNA(Phe) + AMP + diphosphate + H(+). The sequence is that of Phenylalanine--tRNA ligase beta subunit from Methanothrix thermoacetophila (strain DSM 6194 / JCM 14653 / NBRC 101360 / PT) (Methanosaeta thermophila).